The primary structure comprises 725 residues: MSDRYEIVLTCPKGLEGLLLEEARALGLEEAREQTAAVRGQAELEVAYRLCLWSRLANRVLLVLSRFSMNNAEELYEGVKAVDWRDHLEPAGSLAVEFSGHGSGIDNSHFGALKVKDAIVDRLRTAGGERPSIDKINPDLRVHLRLDRGEAVLSLDLSGHSLHQRGYRLQQGAAPLKENLAAAVLIRAGWPRIAAEGGALADPMCGVGTFLIEAALMAADVAPNLKRERWGFSNWLGHVPAIWKKLHAEAEQRAAAGLARPPLWIRGYEADPRLIQPGRNNVERAGLSDWVKIYQGELGSFEPRPDQNQKGLVISNPPYGERLGDEASLLYLYQNLGERLRQACLGWEAAVFTGAPELGKRMGLRSHKQYSFWNGALACKLLLIKVQTEQFVTGERRTRTEDEPVAEASSQARLSEGGQMFANRLQKNLKQLGKWARREGVECYRLYDADMPEYALAVDLYRDWVHVQEYAAPRSVDPDKAQARLLDALAAIPQALGVAQSRVAIKRRERQTGTKQYQRQAAQGQFMEVSEGGVKLLVNLTDYLDTGLFLDHRPLRLRIQREAAGKRFLNLFCYTATATVHAAKGGARSTTSVDLSKTYLDWARRNLSLNGFSDKHRLEQGDVMAWLAEDRGEYDLIFIDPPTFSNSKRMEGVFDVQRDHVELLDLAMARLAGGGVLYFSNNFRKFQLDESLVARYQVEEISAQTLDPDFARNPKIHRAWRFTAR.

The 112-residue stretch at 46–157 folds into the THUMP domain; the sequence is VAYRLCLWSR…RGEAVLSLDL (112 aa).

This sequence belongs to the methyltransferase superfamily. RlmKL family.

It localises to the cytoplasm. The enzyme catalyses guanosine(2445) in 23S rRNA + S-adenosyl-L-methionine = N(2)-methylguanosine(2445) in 23S rRNA + S-adenosyl-L-homocysteine + H(+). The catalysed reaction is guanosine(2069) in 23S rRNA + S-adenosyl-L-methionine = N(2)-methylguanosine(2069) in 23S rRNA + S-adenosyl-L-homocysteine + H(+). Specifically methylates the guanine in position 2445 (m2G2445) and the guanine in position 2069 (m7G2069) of 23S rRNA. The protein is Ribosomal RNA large subunit methyltransferase K/L of Ectopseudomonas mendocina (strain ymp) (Pseudomonas mendocina).